Reading from the N-terminus, the 260-residue chain is MATDVHRPLSTQKAATAAAQASTAAASAVRVDGLTRSFDGRAVIDNLELDVRPGEFVALLGRSGCGKSTLLRILAGLDRDIEGTVLVPRRKAVAFQAPRLMPWKKVWRNVLLGLPGKPERAVAEQALTEVGLAHRSHAWPKTLSGGEAQRASLARALVREPDLLLLDEPFGALDALTRIKAQRLVGELWQRRGCAVLLVTHDVEEAVLLADRVLVMDDGVIAYETEVELDRPRDITDPRFAELRAELLERLGVDTAAEAA.

One can recognise an ABC transporter domain in the interval 29–243; it reads VRVDGLTRSF…DITDPRFAEL (215 aa). 61 to 68 contributes to the ATP binding site; the sequence is GRSGCGKS.

It belongs to the ABC transporter superfamily. Aliphatic sulfonates importer (TC 3.A.1.17.2) family. In terms of assembly, the complex is composed of two ATP-binding proteins (SsuB), two transmembrane proteins (SsuC) and a solute-binding protein (SsuA).

The protein resides in the cell membrane. The enzyme catalyses ATP + H2O + aliphatic sulfonate-[sulfonate-binding protein]Side 1 = ADP + phosphate + aliphatic sulfonateSide 2 + [sulfonate-binding protein]Side 1.. Functionally, part of the ABC transporter complex SsuABC involved in aliphatic sulfonates import. Responsible for energy coupling to the transport system. This chain is Aliphatic sulfonates import ATP-binding protein SsuB 1, found in Streptomyces avermitilis (strain ATCC 31267 / DSM 46492 / JCM 5070 / NBRC 14893 / NCIMB 12804 / NRRL 8165 / MA-4680).